The primary structure comprises 97 residues: Co-chaperonin GroES (97 aa).

This sequence belongs to the GroES chaperonin family. Heptamer of 7 subunits arranged in a ring. Interacts with the chaperonin GroEL.

Its subcellular location is the cytoplasm. Its function is as follows. Together with the chaperonin GroEL, plays an essential role in assisting protein folding. The GroEL-GroES system forms a nano-cage that allows encapsulation of the non-native substrate proteins and provides a physical environment optimized to promote and accelerate protein folding. GroES binds to the apical surface of the GroEL ring, thereby capping the opening of the GroEL channel. This Ectopseudomonas mendocina (strain ymp) (Pseudomonas mendocina) protein is Co-chaperonin GroES.